A 360-amino-acid polypeptide reads, in one-letter code: Phospho-N-acetylmuramoyl-pentapeptide-transferase (360 aa).

The next 10 helical transmembrane spans lie at 27 to 47 (IVSL…MIAW), 73 to 93 (TMGG…WANL), 94 to 114 (SNPY…VGFV), 132 to 152 (WKYF…YSIG), 168 to 188 (VMPQ…VGTS), 199 to 219 (GLAI…AWAT), 236 to 256 (ASEL…FLWF), 263 to 283 (VFMG…IAVL), 288 to 308 (FLLV…ILQV), and 338 to 358 (VIVR…ATLK).

The protein belongs to the glycosyltransferase 4 family. MraY subfamily. Mg(2+) serves as cofactor.

It is found in the cell inner membrane. It carries out the reaction UDP-N-acetyl-alpha-D-muramoyl-L-alanyl-gamma-D-glutamyl-meso-2,6-diaminopimeloyl-D-alanyl-D-alanine + di-trans,octa-cis-undecaprenyl phosphate = di-trans,octa-cis-undecaprenyl diphospho-N-acetyl-alpha-D-muramoyl-L-alanyl-D-glutamyl-meso-2,6-diaminopimeloyl-D-alanyl-D-alanine + UMP. The protein operates within cell wall biogenesis; peptidoglycan biosynthesis. In terms of biological role, catalyzes the initial step of the lipid cycle reactions in the biosynthesis of the cell wall peptidoglycan: transfers peptidoglycan precursor phospho-MurNAc-pentapeptide from UDP-MurNAc-pentapeptide onto the lipid carrier undecaprenyl phosphate, yielding undecaprenyl-pyrophosphoryl-MurNAc-pentapeptide, known as lipid I. The polypeptide is Phospho-N-acetylmuramoyl-pentapeptide-transferase (Pectobacterium atrosepticum (strain SCRI 1043 / ATCC BAA-672) (Erwinia carotovora subsp. atroseptica)).